We begin with the raw amino-acid sequence, 225 residues long: Thaumatin-like protein (225 aa).

Positions 1–24 are cleaved as a signal peptide; that stretch reads MSTFKSLSLSALLFIAFLFTCARG. 8 disulfide bridges follow: Cys-33–Cys-224, Cys-74–Cys-84, Cys-89–Cys-95, Cys-140–Cys-213, Cys-146–Cys-196, Cys-154–Cys-164, Cys-168–Cys-177, and Cys-178–Cys-183.

The protein belongs to the thaumatin family. N-glycosylated.

The protein localises to the secreted. Functionally, has antifungal activity against B.cinerea, C.comatus, M.arachidicola, P.piricola, C.albicans and S.carlsbergensis. Inhibits HIV-1 reverse transcriptase. The protein is Thaumatin-like protein of Actinidia chinensis var. chinensis (Chinese soft-hair kiwi).